Here is a 197-residue protein sequence, read N- to C-terminus: Ras-related protein Rab-7B (197 aa).

Residues 14–21 (GEKSVGKT), 33–38 (VTLKPT), 57–61 (DTSGQ), 119–122 (NKID), and 152–153 (AK) contribute to the GTP site. Positions 31–39 (RFVTLKPTI) match the Effector region motif. Residues C196 and C197 are each lipidated (S-geranylgeranyl cysteine).

Belongs to the small GTPase superfamily. Rab family.

Protein transport. Probably involved in vesicular traffic. This chain is Ras-related protein Rab-7B (rab7B), found in Dictyostelium discoideum (Social amoeba).